The primary structure comprises 296 residues: Enoyl-CoA hydratase ACTT3 (296 aa).

A Peroxisomal targeting signal type 1 motif is present at residues 294 to 296; the sequence is PKL.

Belongs to the enoyl-CoA hydratase/isomerase family.

The protein resides in the peroxisome. The enzyme catalyses a (3S)-3-hydroxyacyl-CoA = a (2E)-enoyl-CoA + H2O. It catalyses the reaction a 4-saturated-(3S)-3-hydroxyacyl-CoA = a (3E)-enoyl-CoA + H2O. Its pathway is mycotoxin biosynthesis. Enoyl-CoA hydratase; part of the gene clusters that mediate the biosynthesis of the host-selective toxins (HSTs) ACT-toxins responsible for brown spot of tangerine disease by the tangerine pathotype which affects tangerines and mandarins. ACT-toxins consist of three moieties, 9,10-epoxy-8-hydroxy-9-methyl-decatrienoic acid (EDA), valine and a polyketide. ACT-toxin I is toxic to both citrus and pear; toxin II the 5''-deoxy derivative of ACT-toxin I, is highly toxic to pear and slightly toxic to citrus. On cellular level, ACT-toxins affect plasma membrane of susceptible cells and cause a sudden increase in loss of K(+) after a few minutes of toxin treatment. The acyl-CoA ligase ACTT1, the hydrolase ACTT2, the enoyl-CoA hydratases ACTT3 and ACTT6, and the acyl-CoA synthetase ACTT5 are all involved in the biosynthesis of the AK-, AF- and ACT-toxin common 9,10-epoxy-8-hydroxy-9-methyl-decatrienoic acid (EDA) structural moiety. The exact role of each enzyme, and of additional enzymes identified within the AF-toxin clusters have still to be determined. On the other hand, ACTTS1 to ACTTS4 are specific to the tangerine pathotype. The function of ACTTS3 is to elongate the polyketide chain portion of ACT-toxin that is unique to this toxin. The enoyl-reductase ACTTS2 might complement the missing enoyl-reductase (ER) domain in ACTTS3 in the synthesis of the polyketide portion of ACT-toxin. The roles of the nonribosomal peptide synthetases-related proteins ACTTS1 and ACTTS4 have also still not been elucidated. The chain is Enoyl-CoA hydratase ACTT3 from Alternaria alternata (Alternaria rot fungus).